The primary structure comprises 295 residues: Bifunctional protein FolD (295 aa).

Residues 166-168 (GRS), Ser-191, and Ile-232 contribute to the NADP(+) site.

This sequence belongs to the tetrahydrofolate dehydrogenase/cyclohydrolase family. Homodimer.

The enzyme catalyses (6R)-5,10-methylene-5,6,7,8-tetrahydrofolate + NADP(+) = (6R)-5,10-methenyltetrahydrofolate + NADPH. It catalyses the reaction (6R)-5,10-methenyltetrahydrofolate + H2O = (6R)-10-formyltetrahydrofolate + H(+). It participates in one-carbon metabolism; tetrahydrofolate interconversion. In terms of biological role, catalyzes the oxidation of 5,10-methylenetetrahydrofolate to 5,10-methenyltetrahydrofolate and then the hydrolysis of 5,10-methenyltetrahydrofolate to 10-formyltetrahydrofolate. This Wolbachia pipientis subsp. Culex pipiens (strain wPip) protein is Bifunctional protein FolD.